We begin with the raw amino-acid sequence, 242 residues long: Glucosamine-6-phosphate deaminase (242 aa).

Asp-67 serves as the catalytic Proton acceptor; for enolization step. Catalysis depends on Asn-136, which acts as the For ring-opening step. Catalysis depends on His-138, which acts as the Proton acceptor; for ring-opening step. Glu-143 (for ring-opening step) is an active-site residue.

It belongs to the glucosamine/galactosamine-6-phosphate isomerase family. NagB subfamily.

The enzyme catalyses alpha-D-glucosamine 6-phosphate + H2O = beta-D-fructose 6-phosphate + NH4(+). It functions in the pathway amino-sugar metabolism; N-acetylneuraminate degradation; D-fructose 6-phosphate from N-acetylneuraminate: step 5/5. Catalyzes the reversible isomerization-deamination of glucosamine 6-phosphate (GlcN6P) to form fructose 6-phosphate (Fru6P) and ammonium ion. In Clostridium perfringens (strain 13 / Type A), this protein is Glucosamine-6-phosphate deaminase.